The following is a 290-amino-acid chain: Nucleotide-binding protein BAV3158 (290 aa).

Residue G9–S16 coordinates ATP. D58–S61 serves as a coordination point for GTP.

It belongs to the RapZ-like family.

Displays ATPase and GTPase activities. The protein is Nucleotide-binding protein BAV3158 of Bordetella avium (strain 197N).